Reading from the N-terminus, the 422-residue chain is UDP-N-acetylglucosamine 1-carboxyvinyltransferase (422 aa).

Residue 22–23 coordinates phosphoenolpyruvate; the sequence is KN. Arg92 lines the UDP-N-acetyl-alpha-D-glucosamine pocket. Cys116 serves as the catalytic Proton donor. 2-(S-cysteinyl)pyruvic acid O-phosphothioketal is present on Cys116. 2 residues coordinate UDP-N-acetyl-alpha-D-glucosamine: Asp306 and Ile328.

This sequence belongs to the EPSP synthase family. MurA subfamily.

It localises to the cytoplasm. It carries out the reaction phosphoenolpyruvate + UDP-N-acetyl-alpha-D-glucosamine = UDP-N-acetyl-3-O-(1-carboxyvinyl)-alpha-D-glucosamine + phosphate. Its pathway is cell wall biogenesis; peptidoglycan biosynthesis. Functionally, cell wall formation. Adds enolpyruvyl to UDP-N-acetylglucosamine. The protein is UDP-N-acetylglucosamine 1-carboxyvinyltransferase of Elusimicrobium minutum (strain Pei191).